Consider the following 506-residue polypeptide: Cytochrome P450 monooxygenase TES1 (506 aa).

The helical transmembrane segment at 26-46 (MSVVLAGLILLASIYFPRFMF) threads the bilayer. N-linked (GlcNAc...) asparagine glycosylation is found at N167, N201, N298, and N427. C440 serves as a coordination point for heme.

This sequence belongs to the cytochrome P450 family. Heme serves as cofactor.

Its subcellular location is the membrane. Its pathway is phytotoxin biosynthesis. Cytochrome P450 monooxygenase; part of the gene cluster that mediates the biosynthesis of the phytotoxin tentoxin, an inhibitor the F1-ATPase activity of chloroplasts, resulting in chlorosis in sensitive plants. Tentoxin is a cyclic tetrapeptide that consists of four amino acid residues: glycine (Gly), alanine (Ala), leucine (Leu), and dehydrophenylalanine (DPhe). In addition, both the Ala and DPhe residues are N-methylated. The nonribosomal peptide synthetase TES assembles tentoxin from the four substrate amino acids. The adenylation domains of each of the 4 modules are responsible for the activation of Gly, Ala, Leu and DPhe, respectively. In addition, the N-methyltransferase domains in the second and fourth modules of TES could be responsible for N-methylation of Ala and DPhe residues. Finally, the condensation domain located in the termination module probably catalyzes the formation of the intramolecular macrocyclization and then the release of tentoxin. The cytochrome P450 monooxygenase TES1 is predicted to be involved in the formation of DPhe. The polypeptide is Cytochrome P450 monooxygenase TES1 (Alternaria alternata (Alternaria rot fungus)).